The primary structure comprises 247 residues: ATP synthase subunit a, chloroplastic (247 aa).

A run of 5 helical transmembrane segments spans residues Gln38–Val58, Val95–Leu115, Ile134–Ser154, Leu199–Leu219, and Gly220–Gly240.

Belongs to the ATPase A chain family. As to quaternary structure, F-type ATPases have 2 components, CF(1) - the catalytic core - and CF(0) - the membrane proton channel. CF(1) has five subunits: alpha(3), beta(3), gamma(1), delta(1), epsilon(1). CF(0) has four main subunits: a, b, b' and c.

The protein resides in the plastid. The protein localises to the chloroplast thylakoid membrane. Key component of the proton channel; it plays a direct role in the translocation of protons across the membrane. The polypeptide is ATP synthase subunit a, chloroplastic (Hordeum vulgare (Barley)).